Reading from the N-terminus, the 113-residue chain is Large ribosomal subunit protein uL24 (113 aa).

This sequence belongs to the universal ribosomal protein uL24 family. As to quaternary structure, part of the 50S ribosomal subunit.

Functionally, one of two assembly initiator proteins, it binds directly to the 5'-end of the 23S rRNA, where it nucleates assembly of the 50S subunit. In terms of biological role, one of the proteins that surrounds the polypeptide exit tunnel on the outside of the subunit. This is Large ribosomal subunit protein uL24 from Micrococcus luteus (Micrococcus lysodeikticus).